A 544-amino-acid polypeptide reads, in one-letter code: Intercellular adhesion molecule 3 (544 aa).

The first 31 residues, M1–G31, serve as a signal peptide directing secretion. The Extracellular portion of the chain corresponds to Q32–V486. Residues G48–S105 enclose the Ig-like C2-type 1 domain. N54, N89, N103, N112, N138, N190, N209, N243, N267, N296, N321, and N326 each carry an N-linked (GlcNAc...) asparagine glycan. Intrachain disulfides connect C55/C98 and C59/C102. Positions G134–R200 constitute an Ig-like C2-type 2 domain. The cysteines at positions 141 and 193 are disulfide-linked. The Ig-like C2-type 3 domain occupies E237–E302. An intrachain disulfide couples C244 to C295. Residues G330 to H383 form the Ig-like C2-type 4 domain. C337 and C376 are joined by a disulfide. Residues N377, N390, and N456 are each glycosylated (N-linked (GlcNAc...) asparagine). The 54-residue stretch at K417–G470 folds into the Ig-like C2-type 5 domain. C424 and C463 are disulfide-bonded. The chain crosses the membrane as a helical span at residues T487–F511. The Cytoplasmic segment spans residues W512–S544.

The protein belongs to the immunoglobulin superfamily. ICAM family. In terms of assembly, interacts with moesin/MSN. As to expression, leukocytes.

It localises to the membrane. In terms of biological role, ICAM proteins are ligands for the leukocyte adhesion protein LFA-1 (integrin alpha-L/beta-2). ICAM3 is also a ligand for integrin alpha-D/beta-2. In association with integrin alpha-L/beta-2, contributes to apoptotic neutrophil phagocytosis by macrophages. The polypeptide is Intercellular adhesion molecule 3 (ICAM3) (Bos taurus (Bovine)).